The following is a 138-amino-acid chain: Trypsin inhibitor DE5 alpha chain (138 aa).

A disulfide bridge links Cys-40 with Cys-86.

It belongs to the protease inhibitor I3 (leguminous Kunitz-type inhibitor) family. In terms of assembly, heterodimer of an alpha and a beta chain linked by a disulfide bond.

In terms of biological role, inhibition of trypsin. This chain is Trypsin inhibitor DE5 alpha chain, found in Adenanthera pavonina (Sandal bead tree).